The following is a 366-amino-acid chain: Homer protein homolog 1 (366 aa).

At Gly-2 the chain carries N-acetylglycine. Residues 2 to 110 form the WH1 domain; it reads GEQPIFSTRA…EKFQEFKEAA (109 aa). Residues 114 to 189 are disordered; sequence KEKSQEKMEL…RTQALSHASS (76 aa). 2 stretches are compositionally biased toward polar residues: residues 138–147 and 155–170; these read SPLTPESING and DVTQNSEPRAEPTQNA. Positions 193–364 form a coiled coil; it reads KHWEAELATL…LRDNLAKLLE (172 aa). The segment at 302 to 366 is required for tetramerization; it reads KLQEVEIRNK…DNLAKLLECS (65 aa). Position 318 is a phosphoserine (Ser-318).

The protein belongs to the Homer family. In terms of assembly, tetramer; this tetrameric structure is critical for forming the high-order complex with SHANK1, which in turn is necessary for the structural and functional integrity of dendritic spines. Isoform 1, isoform 2 and isoform 3 encode a coiled-coil structure that mediates homo- and heteromultimerization. Interacts with GRM1, GRM5, ITPR1, DNM3, RYR1, RYR2 and SHANK3. Interacts with IFT57 and OPHN1. Interacts with SHANK1; forms high-order polymerized complex with a mesh-like network structure, at least composed of SHANK1, HOMER1 and DLGAP1; the complex formation is SHANK1 multimerization dependent. Interacts with NFATC4. Interacts with DAGLA (via PPXXF motif); this interaction is required for the cell membrane localization of DAGLA. Interacts with SRGAP2. As to expression, expressed in skeletal muscle at the level of the Z line, in the forebrain and cerebellum. In terms of tissue distribution, expressed in cardiac and skeletal muscle. Expressed in the hippocampus. As to expression, expressed in skeletal muscle at the level of the Z line, in the heart, forebrain and cerebellum.

It is found in the cytoplasm. The protein localises to the postsynaptic density. It localises to the synapse. The protein resides in the cell projection. Its subcellular location is the dendritic spine. Postsynaptic density scaffolding protein. Binds and cross-links cytoplasmic regions of GRM1, GRM5, ITPR1, DNM3, RYR1, RYR2, SHANK1 and SHANK3. By physically linking GRM1 and GRM5 with ER-associated ITPR1 receptors, it aids the coupling of surface receptors to intracellular calcium release. May also couple GRM1 to PI3 kinase through its interaction with AGAP2. Isoform 1 regulates the trafficking and surface expression of GRM5. Differentially regulates the functions of the calcium activated channel ryanodine receptors RYR1 and RYR2. Isoform 1 decreases the activity of RYR2, and increases the activity of RYR1, whereas isoform 5 counteracts the effects by competing for binding sites. Isoform 3 regulates the trafficking and surface expression of GRM5. Isoform 5 acts as a natural dominant negative, in dynamic competition with constitutively expressed isoform 1, isoform 2 and isoform 3 to regulate synaptic metabotropic glutamate function. Isoform 5, may be involved in the structural changes that occur at synapses during long-lasting neuronal plasticity and development. Forms a high-order complex with SHANK1, which in turn is necessary for the structural and functional integrity of dendritic spines. Negatively regulates T cell activation by inhibiting the calcineurin-NFAT pathway. Acts by competing with calcineurin/PPP3CA for NFAT protein binding, hence preventing NFAT activation by PPP3CA. This chain is Homer protein homolog 1, found in Mus musculus (Mouse).